Reading from the N-terminus, the 308-residue chain is Glutamyl-Q tRNA(Asp) synthetase (308 aa).

L-glutamate contacts are provided by residues 19 to 23 (RFAPS) and E55. The 'HIGH' region signature appears at 22 to 32 (PSPSGELHFGS). C111, C113, Y125, and C129 together coordinate Zn(2+). Residues Y182 and R200 each coordinate L-glutamate. Residues 238–242 (KLSKQ) carry the 'KMSKS' region motif. Residue K241 participates in ATP binding.

This sequence belongs to the class-I aminoacyl-tRNA synthetase family. GluQ subfamily. Requires Zn(2+) as cofactor.

Its function is as follows. Catalyzes the tRNA-independent activation of glutamate in presence of ATP and the subsequent transfer of glutamate onto a tRNA(Asp). Glutamate is transferred on the 2-amino-5-(4,5-dihydroxy-2-cyclopenten-1-yl) moiety of the queuosine in the wobble position of the QUC anticodon. This Escherichia coli O6:H1 (strain CFT073 / ATCC 700928 / UPEC) protein is Glutamyl-Q tRNA(Asp) synthetase.